A 601-amino-acid polypeptide reads, in one-letter code: Elongation factor 4 (601 aa).

One can recognise a tr-type G domain in the interval 7–189 (DNIRNFSIVA…AIVKRLPAPK (183 aa)). Residues 19–24 (DHGKST) and 136–139 (NKVD) contribute to the GTP site.

The protein belongs to the TRAFAC class translation factor GTPase superfamily. Classic translation factor GTPase family. LepA subfamily.

The protein localises to the cell inner membrane. The enzyme catalyses GTP + H2O = GDP + phosphate + H(+). Its function is as follows. Required for accurate and efficient protein synthesis under certain stress conditions. May act as a fidelity factor of the translation reaction, by catalyzing a one-codon backward translocation of tRNAs on improperly translocated ribosomes. Back-translocation proceeds from a post-translocation (POST) complex to a pre-translocation (PRE) complex, thus giving elongation factor G a second chance to translocate the tRNAs correctly. Binds to ribosomes in a GTP-dependent manner. The sequence is that of Elongation factor 4 from Methylorubrum extorquens (strain CM4 / NCIMB 13688) (Methylobacterium extorquens).